A 243-amino-acid polypeptide reads, in one-letter code: MTTLFISDLHLTPSRTDITECFVQFMRNEAVNAEALYVLGDLFEFWIGDEDCTPFAERIRNEFKALTTSGVPVYFIQGNRDFLLGQRFCRETGITLLDDVCTIDLYGEKVVILHGDTLCIDDLKYQEFRKTVHQPWLQWIFKRIPWFIKKRIVAKVQSGVRDDKQHKSLEIMDVNQQEVAQVMSQFCVKLMIHGHTHRPNIHHFEHDNLPLTRIVLGDWYSQGSVLKVTADGYSLEQRPFFTE.

5 residues coordinate Mn(2+): D8, H10, D41, N79, and H114. 79–80 is a binding site for substrate; sequence NR. Positions 122, 164, 167, and 195 each coordinate substrate. Positions 195 and 197 each coordinate Mn(2+).

Belongs to the LpxH family. Mn(2+) is required as a cofactor.

The protein localises to the cell inner membrane. It carries out the reaction UDP-2-N,3-O-bis[(3R)-3-hydroxytetradecanoyl]-alpha-D-glucosamine + H2O = 2-N,3-O-bis[(3R)-3-hydroxytetradecanoyl]-alpha-D-glucosaminyl 1-phosphate + UMP + 2 H(+). It participates in glycolipid biosynthesis; lipid IV(A) biosynthesis; lipid IV(A) from (3R)-3-hydroxytetradecanoyl-[acyl-carrier-protein] and UDP-N-acetyl-alpha-D-glucosamine: step 4/6. Functionally, hydrolyzes the pyrophosphate bond of UDP-2,3-diacylglucosamine to yield 2,3-diacylglucosamine 1-phosphate (lipid X) and UMP by catalyzing the attack of water at the alpha-P atom. Involved in the biosynthesis of lipid A, a phosphorylated glycolipid that anchors the lipopolysaccharide to the outer membrane of the cell. This Vibrio vulnificus (strain YJ016) protein is UDP-2,3-diacylglucosamine hydrolase.